Here is a 310-residue protein sequence, read N- to C-terminus: Elongation factor Ts (310 aa).

Residues 80 to 83 form an involved in Mg(2+) ion dislocation from EF-Tu region; it reads TDFV.

Belongs to the EF-Ts family.

The protein resides in the cytoplasm. Its function is as follows. Associates with the EF-Tu.GDP complex and induces the exchange of GDP to GTP. It remains bound to the aminoacyl-tRNA.EF-Tu.GTP complex up to the GTP hydrolysis stage on the ribosome. This is Elongation factor Ts from Beijerinckia indica subsp. indica (strain ATCC 9039 / DSM 1715 / NCIMB 8712).